Here is a 228-residue protein sequence, read N- to C-terminus: 3-dehydroquinate dehydratase (228 aa).

Residues Ser26, 51 to 53 (EIR), and Arg84 contribute to the 3-dehydroquinate site. The active-site Proton donor/acceptor is the His127. The active-site Schiff-base intermediate with substrate is the Lys150. Arg190, Thr209, and Gln213 together coordinate 3-dehydroquinate.

The protein belongs to the type-I 3-dehydroquinase family. Homodimer.

The enzyme catalyses 3-dehydroquinate = 3-dehydroshikimate + H2O. The protein operates within metabolic intermediate biosynthesis; chorismate biosynthesis; chorismate from D-erythrose 4-phosphate and phosphoenolpyruvate: step 3/7. Involved in the third step of the chorismate pathway, which leads to the biosynthesis of aromatic amino acids. Catalyzes the cis-dehydration of 3-dehydroquinate (DHQ) and introduces the first double bond of the aromatic ring to yield 3-dehydroshikimate. This Thermoplasma acidophilum (strain ATCC 25905 / DSM 1728 / JCM 9062 / NBRC 15155 / AMRC-C165) protein is 3-dehydroquinate dehydratase.